Consider the following 140-residue polypeptide: 3-hydroxyacyl-[acyl-carrier-protein] dehydratase FabZ (140 aa).

The active site involves H48.

The protein belongs to the thioester dehydratase family. FabZ subfamily.

It is found in the cytoplasm. The enzyme catalyses a (3R)-hydroxyacyl-[ACP] = a (2E)-enoyl-[ACP] + H2O. In terms of biological role, involved in unsaturated fatty acids biosynthesis. Catalyzes the dehydration of short chain beta-hydroxyacyl-ACPs and long chain saturated and unsaturated beta-hydroxyacyl-ACPs. This Caldicellulosiruptor saccharolyticus (strain ATCC 43494 / DSM 8903 / Tp8T 6331) protein is 3-hydroxyacyl-[acyl-carrier-protein] dehydratase FabZ.